Here is a 397-residue protein sequence, read N- to C-terminus: Phosphoglycerate kinase (397 aa).

Substrate contacts are provided by residues 25–27 (DLN), R41, 64–67 (HLGR), R118, and R151. ATP is bound by residues K202, E324, and 350–353 (GGDT).

It belongs to the phosphoglycerate kinase family. Monomer.

The protein localises to the cytoplasm. The catalysed reaction is (2R)-3-phosphoglycerate + ATP = (2R)-3-phospho-glyceroyl phosphate + ADP. It participates in carbohydrate degradation; glycolysis; pyruvate from D-glyceraldehyde 3-phosphate: step 2/5. This is Phosphoglycerate kinase from Herminiimonas arsenicoxydans.